The chain runs to 286 residues: F-box/SPRY domain-containing protein 1 (286 aa).

Ala-2 is modified (N-acetylalanine). The 50-residue stretch at 33–82 (SGVGGRLPSRVLELVFSYLELSELRSCALVCKHWYRCLHGDENSEVWRSL) folds into the F-box domain. The region spanning 92 to 284 (LRTDILCNLP…VTLVYLGKPL (193 aa)) is the B30.2/SPRY domain.

The protein belongs to the FBXO45/Fsn family. Forms a complex with MYCBP2 and SKP1. Interacts with HEY1; leading to FBXO45 nuclear translocation. Interacts (via SPRY domain) with CDH2. In terms of tissue distribution, expressed speciffically in the central nervous system, including cerebellum, medulla oblongata, olfactory bulb, hippocampus, cortex and brain stem.

It is found in the secreted. Its subcellular location is the postsynaptic cell membrane. The protein resides in the presynaptic cell membrane. The protein localises to the nucleus. The protein operates within protein modification; protein ubiquitination. Functionally, component of E3 ubiquitin ligase complex consisting of FBXO45, MYCBP2 and SKP1. Functions in substrate recognition but plays also an important role in assembly of the complex. Required for normal neuromuscular synaptogenesis, axon pathfinding and neuronal migration. Regulates neuron migration during brain development through interaction with N-cadherin/CDH2 after secretion via a non-classical mechanism. Plays a role in the regulation of neurotransmission at mature neurons. May control synaptic activity by controlling UNC13A via ubiquitin dependent pathway. Specifically recognizes TP73, promoting its ubiquitination and degradation. Polyubiquitinates NMNAT2, an adenylyltransferase that acts as an axon maintenance factor, and regulates its stability and degradation by the proteasome. Acts also by ubiquitinating FBXW7 during prolonged mitotic arrest and promotes FBXW7 proteasomal degradation. Induces subsequently an increase in mitotic slippage and prevents mitotic cell death. In response to influenza infection, mediates interferon-lambda receptor IFNLR1 polyubiquitination and degradation through the ubiquitin-proteasome system by docking with its intracellular receptor domain. The polypeptide is F-box/SPRY domain-containing protein 1 (Mus musculus (Mouse)).